A 459-amino-acid polypeptide reads, in one-letter code: Sperm-tail PG-rich repeat-containing protein 2 (459 aa).

STPGR repeat units lie at residues 21–30 (VGPGSYQVPF), 63–73 (PGPGHYNVSEA), 119–148 (TLGPAYYKPQFDVSNATLKYKGIHFGNSSG), 157–203 (GPGP…QEKK), 213–243 (TPAPGTYNEPRTALKSLKKTSGLKNIPFGQS), 257–268 (PGPGFYNVLNNT), 351–377 (PAPGSYDVHKSYEMSQVKHKYMPPRSL), 400–410 (GPGPAAYNPVL), and 433–443 (TPGPATYEISQ).

The sequence is that of Sperm-tail PG-rich repeat-containing protein 2 (STPG2) from Homo sapiens (Human).